Reading from the N-terminus, the 278-residue chain is NAD-capped RNA hydrolase NudC (278 aa).

Arg84 serves as a coordination point for substrate. Zn(2+) is bound by residues Cys114 and Cys117. Substrate is bound at residue Glu127. Cys132 is a Zn(2+) binding site. Tyr140 contributes to the substrate binding site. The Nudix hydrolase domain maps to 141-264 (PRISPSMIVL…SIARYLIEAY (124 aa)). Ala174, Glu190, and Glu194 together coordinate a divalent metal cation. Positions 175–196 (GFVEPGESAEDCVHREVMEEVQ) match the Nudix box motif. Position 208–215 (208–215 (QCWPFPHS)) interacts with substrate. Glu235 serves as a coordination point for a divalent metal cation. Ala257 serves as a coordination point for substrate.

Belongs to the Nudix hydrolase family. NudC subfamily. In terms of assembly, homodimer. Mg(2+) serves as cofactor. Requires Mn(2+) as cofactor. It depends on Zn(2+) as a cofactor.

It carries out the reaction a 5'-end NAD(+)-phospho-ribonucleoside in mRNA + H2O = a 5'-end phospho-adenosine-phospho-ribonucleoside in mRNA + beta-nicotinamide D-ribonucleotide + 2 H(+). The catalysed reaction is NAD(+) + H2O = beta-nicotinamide D-ribonucleotide + AMP + 2 H(+). The enzyme catalyses NADH + H2O = reduced beta-nicotinamide D-ribonucleotide + AMP + 2 H(+). In terms of biological role, mRNA decapping enzyme that specifically removes the nicotinamide adenine dinucleotide (NAD) cap from a subset of mRNAs by hydrolyzing the diphosphate linkage to produce nicotinamide mononucleotide (NMN) and 5' monophosphate mRNA. The NAD-cap is present at the 5'-end of some mRNAs and stabilizes RNA against 5'-processing. Has preference for mRNAs with a 5'-end purine. Catalyzes the hydrolysis of a broad range of dinucleotide pyrophosphates. This Pseudomonas syringae pv. syringae (strain B728a) protein is NAD-capped RNA hydrolase NudC.